We begin with the raw amino-acid sequence, 263 residues long: Hatching enzyme 1.2 (263 aa).

A signal peptide spans 1 to 19; sequence MDIRASLSILLLLFGLSQA. The propeptide at 20-64 is activation peptide; that stretch reads SPLREFEAIFVSEPETVDITTQILETNKGSSEVLFEGDVVLPKNR. The 199-residue stretch at 65 to 263 folds into the Peptidase M12A domain; it reads NALICEDKSC…ILRINKLYGC (199 aa). Intrachain disulfides connect cysteine 69-cysteine 74, cysteine 114-cysteine 263, and cysteine 135-cysteine 155. Histidine 163 contacts Zn(2+). Glutamate 164 is an active-site residue. Zn(2+) is bound by residues histidine 167 and histidine 173.

Zn(2+) serves as cofactor. As to expression, expressed in cells of the hatching gland.

It localises to the secreted. The catalysed reaction is Hydrolysis of the inner layer of fish egg envelope. Also hydrolysis of casein and small molecule substrates such as succinyl-Leu-Leu-Val-Tyr-|-7-(4-methyl)coumarylamide.. Functionally, metalloendopeptidase which participates in the breakdown of the egg envelope at the time of hatching. Cleaves the N-terminal regions of the zona pellucia glycoproteins ZP2 and ZP3, where it specifically recognizes the peptide sequences TVQQS-|-DYLIK (major site) and KLMLK-|-APEPF (minor site). This is Hatching enzyme 1.2 from Danio rerio (Zebrafish).